Reading from the N-terminus, the 397-residue chain is Polyphosphatase (397 aa).

3 residues coordinate Mg(2+): Asp-41, Asp-127, and His-148. The Mn(2+) site is built by Asp-41, Asp-127, and His-148. ATP-binding residues include His-149, Ser-286, and Arg-381.

This sequence belongs to the PPase class C family. The cofactor is Mn(2+). Requires Mg(2+) as cofactor.

The enzyme catalyses [phosphate](n) + H2O = [phosphate](n-1) + phosphate + H(+). Its function is as follows. Polyphosphatase (polyPase) involved in the degradation of inorganic polyphosphates (polyP) that is able to degrade a range of chains from three to several hundreds of residues in a highly processive manner. Exclusively shows exopolyphosphatase activity, cleaving inside the polyP chain. This chain is Polyphosphatase, found in Saccharomyces cerevisiae (strain ATCC 204508 / S288c) (Baker's yeast).